The sequence spans 128 residues: Large ribosomal subunit protein uL22 (128 aa).

Belongs to the universal ribosomal protein uL22 family. In terms of assembly, part of the 50S ribosomal subunit.

In terms of biological role, this protein binds specifically to 23S rRNA; its binding is stimulated by other ribosomal proteins, e.g. L4, L17, and L20. It is important during the early stages of 50S assembly. It makes multiple contacts with different domains of the 23S rRNA in the assembled 50S subunit and ribosome. The globular domain of the protein is located near the polypeptide exit tunnel on the outside of the subunit, while an extended beta-hairpin is found that lines the wall of the exit tunnel in the center of the 70S ribosome. The chain is Large ribosomal subunit protein uL22 from Rhodopseudomonas palustris (strain HaA2).